The following is a 236-amino-acid chain: Apoptosis regulator Bcl-2 (236 aa).

The BH4 signature appears at 10-30 (DNREIVMKYIHYKLSQRGYEW). Thr-69 is modified (phosphothreonine; by MAPK8). A Phosphoserine; by MAPK8 and PKC modification is found at Ser-70. Ser-84 bears the Phosphoserine; by MAPK8 mark. The short motif at 90–104 (VHLTLRRAGDDFSRR) is the BH3 element. Positions 133-152 (ELFRDGVNWGRIVAFFEFGG) match the BH1 motif. Positions 184–199 (TWIQDNGGWDAFVELY) match the BH2 motif. Residues 209-230 (FSWLSLKALLSLALVGACITLG) form a helical membrane-spanning segment.

It belongs to the Bcl-2 family. As to quaternary structure, forms homodimers, and heterodimers with BAX, BAD, BAK and Bcl-X(L). Heterodimerization with BAX requires intact BH1 and BH2 motifs, and is necessary for anti-apoptotic activity. Component of the complex, at least composed of LRPPRC, BECN1 and BCL2; the interactions prevent BECN1 from forming an autophagy-inducing complex with PIK3C3. Interacts with EI24. Also interacts with APAF1, BBC3, BCL2L1, BNIPL, MRPL41 and TP53BP2. Binding to FKBP8 seems to target BCL2 to the mitochondria and probably interferes with the binding of BCL2 to its targets. Interacts with BAG1 in an ATP-dependent manner. Interacts with RAF1 (the 'Ser-338' and 'Ser-339' phosphorylated form). Interacts (via the BH4 domain) with EGLN3; the interaction prevents the formation of the BAX-BCL2 complex and inhibits the anti-apoptotic activity of BCL2. Interacts with G0S2; this interaction also prevents the formation of the anti-apoptotic BAX-BCL2 complex. Interacts with RTL10/BOP. Interacts with the SCF(FBXO10) complex. Interacts (via the loop between motifs BH4 and BH3) with NLRP1 (via LRR repeats), but not with NLRP2, NLRP3, NLRP4, PYCARD, nor MEFV. Interacts with GIMAP3/IAN4, GIMAP4/IAN1 and GIMAP5/IAN5. Interacts with BCAP31. Interacts with IRF3; the interaction is inhibited by Sendai virus infection. Interacts with BECN1; thereby inhibiting autophagy in non-starvation conditions. Interacts with AMBRA1; thereby inhibiting autophagy. In terms of processing, phosphorylation/dephosphorylation on Ser-70 regulates anti-apoptotic activity. Growth factor-stimulated phosphorylation on Ser-70 by PKC is required for the anti-apoptosis activity and occurs during the G2/M phase of the cell cycle. In the absence of growth factors, BCL2 appears to be phosphorylated by other protein kinases such as ERKs and stress-activated kinases. Phosphorylated by MAPK8/JNK1 at Thr-69, Ser-70 and Ser-84, which stimulates starvation-induced autophagy. Dephosphorylated by protein phosphatase 2A (PP2A). Post-translationally, proteolytically cleaved by caspases during apoptosis. The cleaved protein, lacking the BH4 motif, has pro-apoptotic activity, causes the release of cytochrome c into the cytosol promoting further caspase activity. Monoubiquitinated by PRKN, leading to an increase in its stability. Ubiquitinated by SCF(FBXO10), leading to its degradation by the proteasome.

The protein localises to the mitochondrion outer membrane. It is found in the nucleus membrane. Its subcellular location is the endoplasmic reticulum membrane. The protein resides in the cytoplasm. In terms of biological role, suppresses apoptosis in a variety of cell systems including factor-dependent lymphohematopoietic and neural cells. Regulates cell death by controlling the mitochondrial membrane permeability. Appears to function in a feedback loop system with caspases. Inhibits caspase activity either by preventing the release of cytochrome c from the mitochondria and/or by binding to the apoptosis-activating factor (APAF-1). Also acts as an inhibitor of autophagy: interacts with BECN1 and AMBRA1 during non-starvation conditions and inhibits their autophagy function. May attenuate inflammation by impairing NLRP1-inflammasome activation, hence CASP1 activation and IL1B release. This Canis lupus familiaris (Dog) protein is Apoptosis regulator Bcl-2 (BCL2).